The chain runs to 405 residues: MMYEKTAEHFEQKYKNLPEGHLLVNLGPSHPATHGILQNVIQIDGERIVEAESVIGYVHRCFEKLGERYTYNQFLVCTDRMNYVSTPLNNIGWILAVEKMMQIEVPDRVTYVRMIISELSRIIDHIICTGILGVDLGAFSGMLHLFHHRENIYQIIEKLTGARLTTTFCRIGGLEKDIYPDFVKEVKLVCKGLKPAIEEFNSLLLKNKIFLGRTEGIGGISAENAIAYGYTGPNLRAAGVDWDVRKDEPYLFYDKVDFDIPIGEDGSVLHRSLVRMEEMRQSIRIIEQLVDGIPSGPWHADLPHAYLPEKHKVYNNMEELIYHFKIIMHGVKVPPGEYYMATEAANGELGFYIVSEGEKSPWRVHVRRPCFWYYQSFAELVRGGLLADSVATMSSLNVIAGELDC.

The protein belongs to the complex I 49 kDa subunit family. NDH-1 is composed of 14 different subunits. Subunits NuoB, C, D, E, F, and G constitute the peripheral sector of the complex.

Its subcellular location is the cell inner membrane. It catalyses the reaction a quinone + NADH + 5 H(+)(in) = a quinol + NAD(+) + 4 H(+)(out). NDH-1 shuttles electrons from NADH, via FMN and iron-sulfur (Fe-S) centers, to quinones in the respiratory chain. The immediate electron acceptor for the enzyme in this species is believed to be ubiquinone. Couples the redox reaction to proton translocation (for every two electrons transferred, four hydrogen ions are translocated across the cytoplasmic membrane), and thus conserves the redox energy in a proton gradient. The polypeptide is NADH-quinone oxidoreductase subunit D (Leptospira interrogans serogroup Icterohaemorrhagiae serovar copenhageni (strain Fiocruz L1-130)).